A 550-amino-acid polypeptide reads, in one-letter code: Medium/long-chain-fatty-acid--CoA/3-oxocholest-4-en-26-oate--CoA ligase (550 aa).

ATP contacts are provided by residues 178–186 (TGGTTGFPK), Asp419, Arg434, and Lys525. The interval 525-550 (KPDYRWAKEQTEARPADDVHAAHVSA) is disordered.

This sequence belongs to the ATP-dependent AMP-binding enzyme family.

The enzyme catalyses a medium-chain fatty acid + ATP + CoA = a medium-chain fatty acyl-CoA + AMP + diphosphate. It catalyses the reaction a long-chain fatty acid + ATP + CoA = a long-chain fatty acyl-CoA + AMP + diphosphate. It carries out the reaction (25S)-3-oxocholest-4-en-26-oate + ATP + CoA = (25S)-3-oxocholest-4-en-26-oyl-CoA + AMP + diphosphate. Its pathway is lipid metabolism; fatty acid biosynthesis. It participates in steroid metabolism; cholesterol metabolism. Catalyzes the activation of medium/long-chain fatty acids as acyl-coenzyme A (acyl-CoA), which are then transferred to the multifunctional polyketide synthase (PKS) type III for further chain extension. Also involved in the degradation of cholesterol via the degradation of the side chains of C-24 branched-chain sterols. Catalyzes the ATP-dependent CoA thioesterification of the sterol 3-oxocholest-4-en-26-oate to yield 3-oxocholest-4-en-26-oyl-CoA. This chain is Medium/long-chain-fatty-acid--CoA/3-oxocholest-4-en-26-oate--CoA ligase, found in Mycobacterium marinum (strain ATCC BAA-535 / M).